The primary structure comprises 146 residues: VHWSAEEKQLITSLWAKVDVPEVGAATLGKMMVMYPWTQRFFAHFGNLSGPSALCGNPQVRAHGKKVLTSFGEALKHLDNVKETFAKLSELHFDKLHVDPENFKLLGNVLIIVLAGHHGKEFTPSTHASFQKLVNVVAHALARRYH.

The 145-residue stretch at 2 to 146 (HWSAEEKQLI…VAHALARRYH (145 aa)) folds into the Globin domain. His-63 and His-92 together coordinate heme b.

This sequence belongs to the globin family. As to quaternary structure, heterotetramer of two alpha chains and two beta chains. Red blood cells.

Its function is as follows. Involved in oxygen transport from the lung to the various peripheral tissues. In Naja naja (Indian cobra), this protein is Hemoglobin subunit beta-2 (HBB2).